Consider the following 284-residue polypeptide: Diaminopimelate epimerase (284 aa).

Substrate contacts are provided by Asn20, Gln53, and Asn73. Residue Cys82 is the Proton donor of the active site. Substrate is bound by residues 83–84, Asn167, Asn200, and 218–219; these read GN and ER. Cys227 (proton acceptor) is an active-site residue. 228–229 is a binding site for substrate; it reads GS.

This sequence belongs to the diaminopimelate epimerase family. As to quaternary structure, homodimer.

It localises to the cytoplasm. The enzyme catalyses (2S,6S)-2,6-diaminopimelate = meso-2,6-diaminopimelate. Its pathway is amino-acid biosynthesis; L-lysine biosynthesis via DAP pathway; DL-2,6-diaminopimelate from LL-2,6-diaminopimelate: step 1/1. Its function is as follows. Catalyzes the stereoinversion of LL-2,6-diaminopimelate (L,L-DAP) to meso-diaminopimelate (meso-DAP), a precursor of L-lysine and an essential component of the bacterial peptidoglycan. The sequence is that of Diaminopimelate epimerase from Xylella fastidiosa (strain M12).